A 147-amino-acid chain; its full sequence is MLMNEFEKACETLRKFMAYMLEKDMKSWTELWDENAVFEFPYAPEGSPKRIEGKAAIYDYIKDYPKQIHLSSFTAPTVYRSADSNTVIAEFQCDGHVIETGLPYRQSYISVIETRDGRIVRYRDYWNPLVVKEAFGGSFLQTEESGK.

Belongs to the limonene-1,2-epoxide hydrolase family.

This is an uncharacterized protein from Bacillus subtilis (strain 168).